A 477-amino-acid chain; its full sequence is MSPQTETKASVGFKAGVKEYKLTYYTPEYQTKDTDILAAFRVTPQPGVPPEEAGAAVAAESSTGTWTTVWTDGLTSLDRYKGRCYRIERVVGEKDQYIAYVAYPLDLFEEGSVTNMFTSIVGNVFGFKALRALRLEDLRIPTAYVKTFQGPPHGIQVERDKLNKYGRPLLGCTIKPKLGLSAKNYGRAVYECLRGGLDFTKDDENVNSQPFMRWRDRFLFCAEALFKAQTETGEIKGHYLNATAGTCEEMMKRAVFARELGVPIVMHDYLTGGFTANTTLAHYCRDNGLLLHIHRAMHAVIDRQKNHGIHFRVLAKALRMSGGDHIHSGTVVGKLEGERDITLGFVDLLRDDFIEQDRSRGIYFTQDWVSLPGVLPVASGGIHVWHMPALTEIFGDDSVLQFGGGTLGHPWGNAPGAVANRVALEACVKARNEGRDLAREGNEIIREASKWSPELAAACEVWKEIVFNFAAVDVLDK.

Positions 1–2 are excised as a propeptide; that stretch reads MS. The residue at position 3 (Pro3) is an N-acetylproline. The residue at position 14 (Lys14) is an N6,N6,N6-trimethyllysine. Residues Asn123 and Thr173 each coordinate substrate. Lys175 serves as the catalytic Proton acceptor. A substrate-binding site is contributed by Lys177. Mg(2+) is bound by residues Lys201, Asp203, and Glu204. At Lys201 the chain carries N6-carboxylysine. Residue His294 is the Proton acceptor of the active site. Residues Arg295, His327, and Ser379 each coordinate substrate.

It belongs to the RuBisCO large chain family. Type I subfamily. Heterohexadecamer of 8 large chains and 8 small chains; disulfide-linked. The disulfide link is formed within the large subunit homodimers. The cofactor is Mg(2+). Post-translationally, the disulfide bond which can form in the large chain dimeric partners within the hexadecamer appears to be associated with oxidative stress and protein turnover.

It localises to the plastid. Its subcellular location is the chloroplast. It catalyses the reaction 2 (2R)-3-phosphoglycerate + 2 H(+) = D-ribulose 1,5-bisphosphate + CO2 + H2O. It carries out the reaction D-ribulose 1,5-bisphosphate + O2 = 2-phosphoglycolate + (2R)-3-phosphoglycerate + 2 H(+). In terms of biological role, ruBisCO catalyzes two reactions: the carboxylation of D-ribulose 1,5-bisphosphate, the primary event in carbon dioxide fixation, as well as the oxidative fragmentation of the pentose substrate in the photorespiration process. Both reactions occur simultaneously and in competition at the same active site. In Solanum bulbocastanum (Wild potato), this protein is Ribulose bisphosphate carboxylase large chain.